Here is a 1194-residue protein sequence, read N- to C-terminus: ATP-dependent RNA helicase DHX30 (1194 aa).

The segment covering 1–10 (MFTLDSFRKD) has biased composition (basic and acidic residues). The tract at residues 1–27 (MFTLDSFRKDRTQHRQRQCKLPPPRLP) is disordered. Ser-6 is subject to Phosphoserine. The 69-residue stretch at 53-121 (PKNLLNSVIG…QAAAAACQLF (69 aa)) folds into the DRBM domain. The tract at residues 153–200 (WWRPEPTMPPTSWRQLNPENIRPAGTGGLSRSLGREEEEDEEEELEEG) is disordered. Acidic residues predominate over residues 188-200 (EEEEDEEEELEEG). Ser-226 and Ser-380 each carry phosphoserine. The Helicase ATP-binding domain maps to 444–612 (LSAIEQHPVV…FGGCPVIKVP (169 aa)). ATP is bound at residue 457-464 (GDTGCGKT). Positions 559–562 (DEVH) match the DEAH box motif. The region spanning 654 to 827 (LVTDLVLHID…NLVLQAKIHM (174 aa)) is the Helicase C-terminal domain.

The protein belongs to the DEAD box helicase family. DEAH subfamily. As to quaternary structure, identified in a complex with TFAM and SSBP1. Interacts (via N-terminus) with ZC3HAV1 (via N-terminal domain) in an RNA-independent manner. Found in a complex with GRSF1, DDX28, FASTKD2 and FASTKD5.

It is found in the cytoplasm. It localises to the mitochondrion. The protein localises to the mitochondrion matrix. The protein resides in the mitochondrion nucleoid. It catalyses the reaction ATP + H2O = ADP + phosphate + H(+). Functionally, RNA-dependent helicase. Plays an important role in the assembly of the mitochondrial large ribosomal subunit. Associates with mitochondrial DNA. Required for optimal function of the zinc-finger antiviral protein ZC3HAV1. Involved in nervous system development and differentiation through its involvement in the up-regulation of a number of genes which are required for neurogenesis, including GSC, NCAM1, neurogenin, and NEUROD. This chain is ATP-dependent RNA helicase DHX30 (Dhx30), found in Rattus norvegicus (Rat).